The primary structure comprises 455 residues: Chromosomal replication initiator protein DnaA (455 aa).

The segment at 1-75 is domain I, interacts with DnaA modulators; that stretch reads MDTNNNIEKE…EILSQNKVGM (75 aa). The tract at residues 75–106 is domain II; it reads MHLAHSVDVRIEVAPKIQISTQSNINYKATKM. The tract at residues 107–321 is domain III, AAA+ region; sequence SVKDSYTFEN…GAIIKISVNA (215 aa). The ATP site is built by Gly151, Gly153, Lys154, and Thr155. The interval 322-455 is domain IV, binds dsDNA; it reads NLMNASIDLN…DKKTAFNSSE (134 aa).

Belongs to the DnaA family. In terms of assembly, oligomerizes as a right-handed, spiral filament on DNA at oriC.

Its subcellular location is the cytoplasm. Its function is as follows. Plays an essential role in the initiation and regulation of chromosomal replication. ATP-DnaA binds to the origin of replication (oriC) to initiate formation of the DNA replication initiation complex once per cell cycle. Binds the DnaA box (a 9 base pair repeat at the origin) and separates the double-stranded (ds)DNA. Forms a right-handed helical filament on oriC DNA; dsDNA binds to the exterior of the filament while single-stranded (ss)DNA is stabiized in the filament's interior. The ATP-DnaA-oriC complex binds and stabilizes one strand of the AT-rich DNA unwinding element (DUE), permitting loading of DNA polymerase. After initiation quickly degrades to an ADP-DnaA complex that is not apt for DNA replication. Binds acidic phospholipids. In Helicobacter pylori (strain HPAG1), this protein is Chromosomal replication initiator protein DnaA.